The following is a 645-amino-acid chain: Glucans biosynthesis glucosyltransferase H (645 aa).

The segment covering 1–13 (MDGTVTPSPTTTA) has biased composition (polar residues). Residues 1-32 (MDGTVTPSPTTTAMPPVSALDAGTPTLPPEAP) are disordered. The next 7 helical transmembrane spans lie at 64–84 (LIGG…SVLW), 98–118 (LFVL…AGFV), 423–443 (APMW…GGGI), 465–485 (AIWI…LGYI), 504–524 (AVSI…VMYL), 559–579 (YGGL…VSPA), and 580–600 (LAAW…VVAL).

The protein belongs to the glycosyltransferase 2 family. OpgH subfamily.

The protein localises to the cell inner membrane. Its pathway is glycan metabolism; osmoregulated periplasmic glucan (OPG) biosynthesis. Functionally, involved in the biosynthesis of osmoregulated periplasmic glucans (OPGs). This is Glucans biosynthesis glucosyltransferase H from Xanthomonas euvesicatoria pv. vesicatoria (strain 85-10) (Xanthomonas campestris pv. vesicatoria).